A 289-amino-acid polypeptide reads, in one-letter code: Serine/threonine-protein phosphatase Pgam5, mitochondrial (289 aa).

A helical transmembrane segment spans residues 7-23 (FACGTGAGLAAYYLQKL).

Belongs to the phosphoglycerate mutase family. BPG-dependent PGAM subfamily. As to quaternary structure, interacts with Pk92B/ASK1.

It is found in the mitochondrion outer membrane. It carries out the reaction O-phospho-L-seryl-[protein] + H2O = L-seryl-[protein] + phosphate. The catalysed reaction is O-phospho-L-threonyl-[protein] + H2O = L-threonyl-[protein] + phosphate. Displays phosphatase activity for serine/threonine residues, and dephosphorylates and activates Pk92B kinase. Has apparently no phosphoglycerate mutase activity. The chain is Serine/threonine-protein phosphatase Pgam5, mitochondrial from Drosophila virilis (Fruit fly).